An 806-amino-acid chain; its full sequence is Volume-regulated anion channel subunit LRRC8E (806 aa).

The Cytoplasmic segment spans residues 1–22; it reads MIPVAEFKQFTEQQPAFKVLKP. Residues 23–43 form a helical membrane-spanning segment; sequence WWDVLAEYITYAMLMIGVFGC. At 44–130 the chain is on the extracellular side; that stretch reads TLQVTQDKII…YETALHWYAK (87 aa). C54 and C311 form a disulfide bridge. N57 and N80 each carry an N-linked (GlcNAc...) asparagine glycan. A disordered region spans residues 75-104; it reads QSSASNDSDLETTVPPPTATSSPPREMSGL. Residues 131–151 traverse the membrane as a helical segment; it reads YFPYLVVIHTLIFIICGNFWF. The Cytoplasmic segment spans residues 152–275; sequence KFPGTSSKIE…MRQTVLKVCK (124 aa). The segment at 182-217 is disordered; it reads EVSGESSQEKPNQERSIDRELSKPNFEEGSPATADL. Over residues 188–207 the composition is skewed to basic and acidic residues; the sequence is SQEKPNQERSIDRELSKPNF. Residues 276-296 traverse the membrane as a helical segment; that stretch reads FVLITIYNAVLVGKIHFIVPC. Over 297 to 323 the chain is Extracellular; sequence SVHTEDMTGYNSFCCNHTKAHLFSKLA. N312 carries N-linked (GlcNAc...) asparagine glycosylation. Residues 324–344 traverse the membrane as a helical segment; it reads ISYLCFLGVYGLTCFYTLYWL. At 345–806 the chain is on the cytoplasmic side; it reads FRRPLKEYSF…VDVRDKFKED (462 aa). LRR repeat units follow at residues 569–589, 593–614, 616–637, 641–662, 664–685, 687–708, 710–731, 733–754, and 756–777; these read HLQK…NALK, LVKE…VFSL, NLQV…ISLQ, KLSV…IRKL, GLEE…LFLC, KLRH…IGVL, LLQY…LFFC, KLKT…VGSL, and CLVK…IGNC.

It belongs to the LRRC8 family. Heterohexamer; oligomerizes with other LRRC8 proteins (lrrc8a, lrrc8c, lrrc8d and/or lrrc8b) to form a heterohexamer. Detected in a channel complex that contains lrrc8a, lrrc8c and lrrc8e. In vivo, the subunit composition may depend primarily on expression levels, and heterooligomeric channels containing various proportions of the different LRRC8 proteins may coexist.

The protein resides in the cell membrane. It localises to the endoplasmic reticulum membrane. The protein localises to the lysosome membrane. It catalyses the reaction chloride(in) = chloride(out). It carries out the reaction iodide(out) = iodide(in). The enzyme catalyses taurine(out) = taurine(in). The catalysed reaction is 2',3'-cGAMP(out) = 2',3'-cGAMP(in). Functionally, non-essential component of the volume-regulated anion channel (VRAC, also named VSOAC channel), an anion channel required to maintain a constant cell volume in response to extracellular or intracellular osmotic changes. The VRAC channel conducts iodide better than chloride and can also conduct organic osmolytes like taurine. Mediates efflux of amino acids, such as aspartate, in response to osmotic stress. The VRAC channel also mediates transport of immunoreactive cyclic dinucleotide GMP-AMP (2'-3'-cGAMP), an immune messenger produced in response to DNA virus in the cytosol. Channel activity requires lrrc8a plus at least one other family member (lrrc8b, lrrc8c, lrrc8d or lrrc8e); channel characteristics depend on the precise subunit composition. Also plays a role in lysosome homeostasis by forming functional lysosomal VRAC channels in response to low cytoplasmic ionic strength condition: lysosomal VRAC channels are necessary for the formation of large lysosome-derived vacuoles, which store and then expel excess water to maintain cytosolic water homeostasis. This chain is Volume-regulated anion channel subunit LRRC8E, found in Xenopus laevis (African clawed frog).